A 124-amino-acid chain; its full sequence is Period circadian protein (124 aa).

A disordered region spans residues 30 to 124 (TAPVELDPPK…TVTLTESLLN (95 aa)). Positions 71–96 (SGNFTTGSNVRMSSVTNTSNAGTGTS) are enriched in low complexity. Residues 97–107 (SAGGNGNGGSG) show a composition bias toward gly residues.

Forms a heterodimer with timeless (TIM); the complex then translocates into the nucleus. Phosphorylated with a circadian rhythmicity, probably by the double-time protein (dbt). Phosphorylation could be implicated in the stability of per monomer and in the formation of heterodimer per-tim.

It is found in the nucleus. The protein localises to the cytoplasm. It localises to the perinuclear region. In terms of biological role, essential for biological clock functions. Determines the period length of circadian and ultradian rhythms; an increase in PER dosage leads to shortened circadian rhythms and a decrease leads to lengthened circadian rhythms. Essential for the circadian rhythmicity of locomotor activity, eclosion behavior, and for the rhythmic component of the male courtship song that originates in the thoracic nervous system. The biological cycle depends on the rhythmic formation and nuclear localization of the TIM-PER complex. Light induces the degradation of TIM, which promotes elimination of PER. Nuclear activity of the heterodimer coordinatively regulates PER and TIM transcription through a negative feedback loop. Behaves as a negative element in circadian transcriptional loop. Does not appear to bind DNA, suggesting indirect transcriptional inhibition. This Hirtodrosophila pictiventris (Fruit fly) protein is Period circadian protein (per).